Here is a 234-residue protein sequence, read N- to C-terminus: Proteasome subunit alpha type-2 (234 aa).

An N-acetylalanine modification is found at Ala-2. Residue Tyr-6 is modified to Phosphotyrosine. A phosphoserine mark is found at Ser-7, Ser-14, and Ser-16. A Phosphotyrosine modification is found at Tyr-24. Lys-70 bears the N6-acetyllysine mark. Residues Tyr-76 and Tyr-121 each carry the phosphotyrosine modification. Lys-171 is modified (N6-acetyllysine).

Belongs to the peptidase T1A family. The 26S proteasome consists of a 20S proteasome core and two 19S regulatory subunits. The 20S proteasome core is a barrel-shaped complex made of 28 subunits that are arranged in four stacked rings. The two outer rings are each formed by seven alpha subunits, and the two inner rings are formed by seven beta subunits. The proteolytic activity is exerted by three beta-subunits PSMB5, PSMB6 and PSMB7. In terms of processing, phosphorylated on tyrosine residues; which may be important for nuclear import.

It is found in the cytoplasm. The protein localises to the nucleus. Functionally, component of the 20S core proteasome complex involved in the proteolytic degradation of most intracellular proteins. This complex plays numerous essential roles within the cell by associating with different regulatory particles. Associated with two 19S regulatory particles, forms the 26S proteasome and thus participates in the ATP-dependent degradation of ubiquitinated proteins. The 26S proteasome plays a key role in the maintenance of protein homeostasis by removing misfolded or damaged proteins that could impair cellular functions, and by removing proteins whose functions are no longer required. Associated with the PA200 or PA28, the 20S proteasome mediates ubiquitin-independent protein degradation. This type of proteolysis is required in several pathways including spermatogenesis (20S-PA200 complex) or generation of a subset of MHC class I-presented antigenic peptides (20S-PA28 complex). The polypeptide is Proteasome subunit alpha type-2 (PSMA2) (Bos taurus (Bovine)).